Consider the following 183-residue polypeptide: Ferritin light chain 1 (183 aa).

The Ferritin-like diiron domain occupies Q7–A156. 5 residues coordinate Fe cation: E54, E57, E58, E61, and E64.

Belongs to the ferritin family. As to quaternary structure, oligomer of 24 subunits. There are two types of subunits: L (light) chain and H (heavy) chain. The major chain can be light or heavy, depending on the species and tissue type. The functional molecule forms a roughly spherical shell with a diameter of 12 nm and contains a central cavity into which the insoluble mineral iron core is deposited. Interacts with NCOA4.

It is found in the cytoplasm. Its subcellular location is the cytoplasmic vesicle. The protein resides in the autophagosome. The protein localises to the autolysosome. Functionally, stores iron in a soluble, non-toxic, readily available form. Important for iron homeostasis. Iron is taken up in the ferrous form and deposited as ferric hydroxides after oxidation. Also plays a role in delivery of iron to cells. Mediates iron uptake in capsule cells of the developing kidney. Degraded to release iron upon autophagy activation by nutrient starvation. The polypeptide is Ferritin light chain 1 (Ftl1) (Mus musculus (Mouse)).